The chain runs to 426 residues: Synaptotagmin-13 (426 aa).

Over 1–6 (MVLSVP) the chain is Vesicular. The chain crosses the membrane as a helical span at residues 7–29 (VIALGATLGTATSILALCGVTCL). The Cytoplasmic segment spans residues 30–426 (CRHMHPKKGL…QIAMWHQLHL (397 aa)). C2 domains are found at residues 158–275 (QAPK…AQWG) and 287–422 (GAGE…AMWH).

The protein belongs to the synaptotagmin family. Interacts with NRXN1. In terms of tissue distribution, expressed in brain, pancreas and kidney.

The protein localises to the membrane. May be involved in transport vesicle docking to the plasma membrane. In Homo sapiens (Human), this protein is Synaptotagmin-13 (SYT13).